Reading from the N-terminus, the 242-residue chain is Ribonuclease 3 (242 aa).

The 129-residue stretch at 18–146 (APAIEAKLGY…IIGAIYLDGG (129 aa)) folds into the RNase III domain. E59 contributes to the Mg(2+) binding site. D63 is a catalytic residue. Residues D132 and E135 each contribute to the Mg(2+) site. E135 is a catalytic residue. The DRBM domain occupies 172–241 (NWKALLQDYC…AADALSRVEL (70 aa)). Residues 218-227 (RGKGTSKKEA) show a composition bias toward basic and acidic residues. Residues 218-242 (RGKGTSKKEAQQAAAADALSRVELP) are disordered.

This sequence belongs to the ribonuclease III family. In terms of assembly, homodimer. Requires Mg(2+) as cofactor.

It is found in the cytoplasm. The catalysed reaction is Endonucleolytic cleavage to 5'-phosphomonoester.. In terms of biological role, digests double-stranded RNA. Involved in the processing of primary rRNA transcript to yield the immediate precursors to the large and small rRNAs (23S and 16S). Processes some mRNAs, and tRNAs when they are encoded in the rRNA operon. Processes pre-crRNA and tracrRNA of type II CRISPR loci if present in the organism. This is Ribonuclease 3 from Protochlamydia amoebophila (strain UWE25).